The sequence spans 259 residues: Proteasome subunit alpha (259 aa).

Belongs to the peptidase T1A family. As to quaternary structure, the 20S proteasome core is composed of 14 alpha and 14 beta subunits that assemble into four stacked heptameric rings, resulting in a barrel-shaped structure. The two inner rings, each composed of seven catalytic beta subunits, are sandwiched by two outer rings, each composed of seven alpha subunits. The catalytic chamber with the active sites is on the inside of the barrel. Has a gated structure, the ends of the cylinder being occluded by the N-termini of the alpha-subunits. Is capped at one or both ends by the proteasome regulatory ATPase, PAN.

The protein resides in the cytoplasm. The formation of the proteasomal ATPase PAN-20S proteasome complex, via the docking of the C-termini of PAN into the intersubunit pockets in the alpha-rings, triggers opening of the gate for substrate entry. Interconversion between the open-gate and close-gate conformations leads to a dynamic regulation of the 20S proteasome proteolysis activity. Functionally, component of the proteasome core, a large protease complex with broad specificity involved in protein degradation. This chain is Proteasome subunit alpha, found in Methanococcus maripaludis (strain C7 / ATCC BAA-1331).